The chain runs to 151 residues: MCDFTEDQTAEFKEAFQLFDRTGDGKILYSQCGDVMRALGQNPTNAEVLKVLGNPKSDEMNVKVLDFEHFLPMLQTVAKNKDQGTYEDYVEGLRVFDKEGNGTVMGAEIRHVLVTLGEKMTEEEVEMLVAGHEDSNGCINYEAFVRHILSG.

An N-acetylcysteine modification is found at C2. The EF-hand 1 domain maps to 7 to 42 (DQTAEFKEAFQLFDRTGDGKILYSQCGDVMRALGQN). S57 bears the Phosphoserine mark. N6-acetyllysine is present on K81. In terms of domain architecture, EF-hand 2 spans 84–119 (GTYEDYVEGLRVFDKEGNGTVMGAEIRHVLVTLGEK).

In terms of assembly, myosin is a hexamer of 2 heavy chains and 4 light chains. Interacts with SPATA6.

Its function is as follows. Regulatory light chain of myosin. Does not bind calcium. The protein is Myosin light polypeptide 6 (MYL6) of Bos taurus (Bovine).